The chain runs to 207 residues: Dephospho-CoA kinase (207 aa).

A DPCK domain is found at L12 to L207. G20 to T25 serves as a coordination point for ATP.

It belongs to the CoaE family.

The protein resides in the cytoplasm. It catalyses the reaction 3'-dephospho-CoA + ATP = ADP + CoA + H(+). Its pathway is cofactor biosynthesis; coenzyme A biosynthesis; CoA from (R)-pantothenate: step 5/5. Functionally, catalyzes the phosphorylation of the 3'-hydroxyl group of dephosphocoenzyme A to form coenzyme A. The chain is Dephospho-CoA kinase from Leptospira interrogans serogroup Icterohaemorrhagiae serovar copenhageni (strain Fiocruz L1-130).